The primary structure comprises 188 residues: Elongation factor P (188 aa).

The protein belongs to the elongation factor P family.

The protein localises to the cytoplasm. The protein operates within protein biosynthesis; polypeptide chain elongation. Its function is as follows. Involved in peptide bond synthesis. Stimulates efficient translation and peptide-bond synthesis on native or reconstituted 70S ribosomes in vitro. Probably functions indirectly by altering the affinity of the ribosome for aminoacyl-tRNA, thus increasing their reactivity as acceptors for peptidyl transferase. The sequence is that of Elongation factor P from Leptospira borgpetersenii serovar Hardjo-bovis (strain JB197).